A 121-amino-acid chain; its full sequence is Large ribosomal subunit protein bL20 (121 aa).

It belongs to the bacterial ribosomal protein bL20 family.

Its function is as follows. Binds directly to 23S ribosomal RNA and is necessary for the in vitro assembly process of the 50S ribosomal subunit. It is not involved in the protein synthesizing functions of that subunit. The sequence is that of Large ribosomal subunit protein bL20 from Methylorubrum populi (strain ATCC BAA-705 / NCIMB 13946 / BJ001) (Methylobacterium populi).